We begin with the raw amino-acid sequence, 424 residues long: Histidine--tRNA ligase (424 aa).

The protein belongs to the class-II aminoacyl-tRNA synthetase family. In terms of assembly, homodimer.

The protein resides in the cytoplasm. The catalysed reaction is tRNA(His) + L-histidine + ATP = L-histidyl-tRNA(His) + AMP + diphosphate + H(+). The protein is Histidine--tRNA ligase of Shigella boydii serotype 18 (strain CDC 3083-94 / BS512).